Reading from the N-terminus, the 147-residue chain is Flagellar assembly factor FliW (147 aa).

It belongs to the FliW family. In terms of assembly, interacts with translational regulator CsrA and flagellin(s).

The protein resides in the cytoplasm. In terms of biological role, acts as an anti-CsrA protein, binds CsrA and prevents it from repressing translation of its target genes, one of which is flagellin. Binds to flagellin and participates in the assembly of the flagellum. The sequence is that of Flagellar assembly factor FliW from Chromobacterium violaceum (strain ATCC 12472 / DSM 30191 / JCM 1249 / CCUG 213 / NBRC 12614 / NCIMB 9131 / NCTC 9757 / MK).